A 315-amino-acid polypeptide reads, in one-letter code: ATP synthase gamma chain (315 aa).

Belongs to the ATPase gamma chain family. F-type ATPases have 2 components, CF(1) - the catalytic core - and CF(0) - the membrane proton channel. CF(1) has five subunits: alpha(3), beta(3), gamma(1), delta(1), epsilon(1). CF(0) has three main subunits: a, b and c.

Its subcellular location is the cell membrane. Its function is as follows. Produces ATP from ADP in the presence of a proton gradient across the membrane. The gamma chain is believed to be important in regulating ATPase activity and the flow of protons through the CF(0) complex. This Latilactobacillus sakei subsp. sakei (strain 23K) (Lactobacillus sakei subsp. sakei) protein is ATP synthase gamma chain.